A 158-amino-acid chain; its full sequence is RNA pyrophosphohydrolase (158 aa).

One can recognise a Nudix hydrolase domain in the interval 6 to 149; it reads GYRLNVGIVL…KRHVYRKVMK (144 aa). Residues 38 to 59 carry the Nudix box motif; it reads GGINIGETPEQAMYRELFEEIG.

Belongs to the Nudix hydrolase family. RppH subfamily. A divalent metal cation serves as cofactor.

Functionally, accelerates the degradation of transcripts by removing pyrophosphate from the 5'-end of triphosphorylated RNA, leading to a more labile monophosphorylated state that can stimulate subsequent ribonuclease cleavage. This Blochmanniella floridana protein is RNA pyrophosphohydrolase.